A 623-amino-acid polypeptide reads, in one-letter code: uncharacterized protein (623 aa).

Residues 157 to 166 (LNESPLRDQQ) are compositionally biased toward basic and acidic residues. The segment at 157–237 (LNESPLRDQQ…QGLPDHNNSI (81 aa)) is disordered. Polar residues predominate over residues 167–177 (ESSTPSKNSTL). Residues 193–210 (AFRPLPSPSRRSSQSAPA) are compositionally biased toward low complexity.

This is an uncharacterized protein from Macaca fascicularis (Crab-eating macaque).